The chain runs to 449 residues: uncharacterized protein (449 aa).

The residue at position 420 (Ser420) is a Phosphoserine.

This sequence belongs to the NAD kinase family.

It is found in the cytoplasm. The protein localises to the nucleus. This is an uncharacterized protein from Schizosaccharomyces pombe (strain 972 / ATCC 24843) (Fission yeast).